The primary structure comprises 519 residues: AarF domain-containing protein kinase 1 (519 aa).

Positions 145-481 (SFEDTPLGAA…SLYRRVHISL (337 aa)) constitute a Protein kinase domain. Residues 151–159 (LGAASLAQV) and K173 contribute to the ATP site. The active-site Proton acceptor is D305.

The protein belongs to the protein kinase superfamily. ADCK protein kinase family.

Its subcellular location is the mitochondrion. Appears to be essential for maintaining mitochondrial cristae formation and mitochondrial function by acting via YME1L1 in a kinase-independent manner to regulate essential mitochondrial structural proteins OPA1 and IMMT. The action of this enzyme is not yet clear. It is not known if it has protein kinase activity and what type of substrate it would phosphorylate (Ser, Thr or Tyr). The chain is AarF domain-containing protein kinase 1 (ADCK1) from Gallus gallus (Chicken).